We begin with the raw amino-acid sequence, 454 residues long: MNPNQKIITIGSICLVVGLISLILQIGNIISIWISHSIQTGSQNHTGICNQNIITYKNSTWVKDTTSVILTGNSSLCPIRGWAIYSKDNSIRIGSKGDVFVIREPFISCSHLECRTFFLTQGALLNDKHSNGTVKDRSPYRALMSCPVGEAPSPYNSRFESVAWSASACHDGMGWLTIGISGPDNGAVAVLKYNGIITETIKSWRKKILRTQESECACVNGSCFTIMTDGPSDGLASYKIFKIEKGKVTKSIELNAPNSHYEECSCYPDTGKVMCVCRDNWHGSNRPWVSFDQNLDYQIGYICSGVFGDNPRPEDGTGSCGPVYVDGANGVKGFSYRYGNGVWIGRTKSHSSRHGFEMIWDPNGWTETDSKFSVRQDVVAMTDWSGYSGSFVQHPELTGLDCMRPCFWVELIRGRPKEKTIWTSASSISFCGVNSDTVDWSWPDGAELPFSIDK.

The Intravirion segment spans residues 1–6; it reads MNPNQK. A helical transmembrane segment spans residues 7–27; sequence IITIGSICLVVGLISLILQIG. The involved in apical transport and lipid raft association stretch occupies residues 11–33; that stretch reads GSICLVVGLISLILQIGNIISIW. Residues 28–454 lie on the Virion surface side of the membrane; the sequence is NIISIWISHS…GAELPFSIDK (427 aa). The hypervariable stalk region stretch occupies residues 36–75; the sequence is HSIQTGSQNHTGICNQNIITYKNSTWVKDTTSVILTGNSS. Residues Asn-44, Asn-58, and Asn-73 are each glycosylated (N-linked (GlcNAc...) asparagine; by host). A head of neuraminidase region spans residues 76–454; sequence LCPIRGWAIY…GAELPFSIDK (379 aa). 8 disulfides stabilise this stretch: Cys-77-Cys-402, Cys-109-Cys-114, Cys-169-Cys-216, Cys-218-Cys-223, Cys-264-Cys-277, Cys-266-Cys-275, Cys-303-Cys-320, and Cys-406-Cys-431. Arg-103 is a binding site for substrate. N-linked (GlcNAc...) asparagine; by host glycosylation occurs at Asn-131. Catalysis depends on Asp-136, which acts as the Proton donor/acceptor. Arg-137 provides a ligand contact to substrate. A glycan (N-linked (GlcNAc...) asparagine; by host) is linked at Asn-220. 262–263 is a substrate binding site; it reads EE. Position 278 (Arg-278) interacts with substrate. Ca(2+)-binding residues include Asp-279, Gly-283, Asp-309, and Asn-329. Arg-353 serves as a coordination point for substrate. Tyr-387 functions as the Nucleophile in the catalytic mechanism.

This sequence belongs to the glycosyl hydrolase 34 family. Homotetramer. Ca(2+) serves as cofactor. N-glycosylated.

It localises to the virion membrane. It is found in the host apical cell membrane. The catalysed reaction is Hydrolysis of alpha-(2-&gt;3)-, alpha-(2-&gt;6)-, alpha-(2-&gt;8)- glycosidic linkages of terminal sialic acid residues in oligosaccharides, glycoproteins, glycolipids, colominic acid and synthetic substrates.. With respect to regulation, inhibited by the neuraminidase inhibitors zanamivir (Relenza) and oseltamivir (Tamiflu). These drugs interfere with the release of progeny virus from infected cells and are effective against all influenza strains. Resistance to neuraminidase inhibitors is quite rare. Functionally, catalyzes the removal of terminal sialic acid residues from viral and cellular glycoconjugates. Cleaves off the terminal sialic acids on the glycosylated HA during virus budding to facilitate virus release. Additionally helps virus spread through the circulation by further removing sialic acids from the cell surface. These cleavages prevent self-aggregation and ensure the efficient spread of the progeny virus from cell to cell. Otherwise, infection would be limited to one round of replication. Described as a receptor-destroying enzyme because it cleaves a terminal sialic acid from the cellular receptors. May facilitate viral invasion of the upper airways by cleaving the sialic acid moieties on the mucin of the airway epithelial cells. Likely to plays a role in the budding process through its association with lipid rafts during intracellular transport. May additionally display a raft-association independent effect on budding. Plays a role in the determination of host range restriction on replication and virulence. Sialidase activity in late endosome/lysosome traffic seems to enhance virus replication. The sequence is that of Neuraminidase from Aves (Human).